We begin with the raw amino-acid sequence, 132 residues long: ATP synthase epsilon chain (132 aa).

It belongs to the ATPase epsilon chain family. F-type ATPases have 2 components, CF(1) - the catalytic core - and CF(0) - the membrane proton channel. CF(1) has five subunits: alpha(3), beta(3), gamma(1), delta(1), epsilon(1). CF(0) has three main subunits: a, b and c.

Its subcellular location is the cell membrane. Produces ATP from ADP in the presence of a proton gradient across the membrane. The protein is ATP synthase epsilon chain of Clostridium kluyveri (strain NBRC 12016).